The sequence spans 859 residues: DNA mismatch repair protein MutS (859 aa).

617–624 (GPNMGGKS) lines the ATP pocket. The segment at 799–821 (ETTSLPHEQPRAKPGKPAVPQQS) is disordered.

This sequence belongs to the DNA mismatch repair MutS family.

Functionally, this protein is involved in the repair of mismatches in DNA. It is possible that it carries out the mismatch recognition step. This protein has a weak ATPase activity. The sequence is that of DNA mismatch repair protein MutS from Pseudomonas syringae pv. syringae (strain B728a).